Reading from the N-terminus, the 318-residue chain is Rhomboid-related protein 4 (318 aa).

The Cytoplasmic portion of the chain corresponds to 1-21 (MQRRSRGINTGLILLLSQIFH). The chain crosses the membrane as a helical span at residues 22–42 (VGINNIPPVTLATLALNIWFF). At 43-106 (LNPQKPLYSS…RRLGSRWFAY (64 aa)) the chain is on the extracellular side. A helical transmembrane segment spans residues 107-127 (VITTFSVLTGVVYLLLQFAVA). Topologically, residues 128 to 137 (EFMDEPDFKR) are cytoplasmic. The helical transmembrane segment at 138-154 (SCAVGFSGVLFALKVLN) threads the bilayer. Serine 144 functions as the Nucleophile in the catalytic mechanism. Over 155-179 (NHYCPGGFVNILGFPVPNRFACWVE) the chain is Extracellular. A helical membrane pass occupies residues 180–204 (LVAIHLFSPGTSFAGHQAGILVGLM). Histidine 195 is a catalytic residue. Topologically, residues 205 to 318 (YTQGPLKKIM…RQRLHRFDSQ (114 aa)) are cytoplasmic. The interval 271–286 (SEEEQLERALQASLWD) is ubiquitin-binding domain (UBD). The segment at 285–318 (WDRGHTRNSPPPYGFHLSPEEEMRRQRLHRFDSQ) is disordered. A compositionally biased stretch (basic and acidic residues) spans 302–318 (SPEEEMRRQRLHRFDSQ). The VCP/p97-interacting motif (VIM) stretch occupies residues 303–318 (PEEEMRRQRLHRFDSQ).

The protein belongs to the peptidase S54 family. In terms of assembly, interacts with BIK and STEAP3. Interacts (via C-terminal domain) with VCP. Interacts with ubiquitin and ubiquitinated proteins.

The protein resides in the endoplasmic reticulum membrane. It is found in the mitochondrion membrane. It carries out the reaction Cleaves type-1 transmembrane domains using a catalytic dyad composed of serine and histidine that are contributed by different transmembrane domains.. Inhibited by aprotinin. In terms of biological role, intramembrane-cleaving serine protease that cleaves single transmembrane or multi-pass membrane proteins in the hydrophobic plane of the membrane, luminal loops and juxtamembrane regions. Involved in regulated intramembrane proteolysis and the subsequent release of functional polypeptides from their membrane anchors. Functional component of endoplasmic reticulum-associated degradation (ERAD) for misfolded membrane proteins. Required for the degradation process of some specific misfolded endoplasmic reticulum (ER) luminal proteins. Participates in the transfer of misfolded proteins from the ER to the cytosol, where they are destroyed by the proteasome in a ubiquitin-dependent manner. Functions in BIK, MPZ, PKD1, PTCRA, RHO, STEAP3 and TRAC processing. Involved in the regulation of exosomal secretion; inhibits the TSAP6-mediated secretion pathway. Involved in the regulation of apoptosis; modulates BIK-mediated apoptotic activity. Also plays a role in the regulation of spermatogenesis; inhibits apoptotic activity in spermatogonia. The chain is Rhomboid-related protein 4 (RHBDD1) from Pongo abelii (Sumatran orangutan).